Consider the following 62-residue polypeptide: Short neurotoxin C (62 aa).

The span at 1-16 (RRCFNQQSSQPQTNKS) shows a compositional bias: polar residues. The disordered stretch occupies residues 1-22 (RRCFNQQSSQPQTNKSCPPGEN). Intrachain disulfides connect Cys-3/Cys-24, Cys-17/Cys-41, Cys-43/Cys-54, and Cys-55/Cys-60.

It belongs to the three-finger toxin family. Short-chain subfamily. Type I alpha-neurotoxin sub-subfamily. As to expression, expressed by the venom gland.

The protein resides in the secreted. Its function is as follows. Binds to muscle nicotinic acetylcholine receptor (nAChR) and inhibit acetylcholine from binding to the receptor, thereby impairing neuromuscular transmission. This chain is Short neurotoxin C, found in Laticauda laticaudata (Blue-ringed sea krait).